We begin with the raw amino-acid sequence, 436 residues long: MAKIVKVIGREIIDSRGNPTVEAEVHLXGGFVGLAAAPSGASTGSREALELRDGDKSRFLGKGVLKAVAAVNNEIAQAIVGKDATNQAEIDQIMIDLDGTENKSNFGANAILAVSLANAKAAAASKGLPLYAYIAELNGTAGVYSMPLPMMNIINGGEHADNNVDIQEFMIQPVGAKTLREALRIGAEVFHNLAKVLKAKGMSTAVGDEGGFAPNLASNADALACIKEAVEKAGYVLGKDVTLAMDCASSEFYNKENGMYEMKGEGKSFTSQEFTHYLEELCKEYPIVSIEDGQDESDWEGFAYQTKVLGDRVQLVGDDLFVTNTKILKEGIEKGIANSILIKFNQIGSLTETLAAIKMAKDAGYTAVISHRSGETEDATIADLAVGTAAGQIKTGSMSRSDRIAKYNQLIRIEEALERAGTPAAFPGLKAVKGQA.

Gln167 is a binding site for (2R)-2-phosphoglycerate. Catalysis depends on Glu209, which acts as the Proton donor. Mg(2+) is bound by residues Asp246, Glu291, and Asp318. Positions 343, 372, 373, and 394 each coordinate (2R)-2-phosphoglycerate. Lys343 acts as the Proton acceptor in catalysis.

The protein belongs to the enolase family. Component of the RNA degradosome, a multiprotein complex involved in RNA processing and mRNA degradation. Mg(2+) serves as cofactor.

The protein resides in the cytoplasm. The protein localises to the secreted. It localises to the cell surface. It carries out the reaction (2R)-2-phosphoglycerate = phosphoenolpyruvate + H2O. It functions in the pathway carbohydrate degradation; glycolysis; pyruvate from D-glyceraldehyde 3-phosphate: step 4/5. In terms of biological role, catalyzes the reversible conversion of 2-phosphoglycerate (2-PG) into phosphoenolpyruvate (PEP). It is essential for the degradation of carbohydrates via glycolysis. The polypeptide is Enolase (Haemophilus influenzae (strain ATCC 51907 / DSM 11121 / KW20 / Rd)).